A 447-amino-acid polypeptide reads, in one-letter code: Tubulin beta-2 chain (447 aa).

GTP-binding residues include Gln-11, Glu-69, Ser-138, Gly-142, Thr-143, Gly-144, Asn-204, and Asn-226. Position 69 (Glu-69) interacts with Mg(2+). Over residues 419–428 (VSEYQQYQDA) the composition is skewed to polar residues. The segment at 419–447 (VSEYQQYQDATSDEEGEYEDEDQEPEEDM) is disordered. The segment covering 429 to 447 (TSDEEGEYEDEDQEPEEDM) has biased composition (acidic residues).

The protein belongs to the tubulin family. As to quaternary structure, dimer of alpha and beta chains. A typical microtubule is a hollow water-filled tube with an outer diameter of 25 nm and an inner diameter of 15 nM. Alpha-beta heterodimers associate head-to-tail to form protofilaments running lengthwise along the microtubule wall with the beta-tubulin subunit facing the microtubule plus end conferring a structural polarity. Microtubules usually have 13 protofilaments but different protofilament numbers can be found in some organisms and specialized cells. The cofactor is Mg(2+).

The protein localises to the cytoplasm. It is found in the cytoskeleton. In terms of biological role, tubulin is the major constituent of microtubules, a cylinder consisting of laterally associated linear protofilaments composed of alpha- and beta-tubulin heterodimers. Microtubules grow by the addition of GTP-tubulin dimers to the microtubule end, where a stabilizing cap forms. Below the cap, tubulin dimers are in GDP-bound state, owing to GTPase activity of alpha-tubulin. The sequence is that of Tubulin beta-2 chain (TUBB2) from Triticum aestivum (Wheat).